We begin with the raw amino-acid sequence, 254 residues long: Uracil-DNA glycosylase (254 aa).

Aspartate 91 serves as the catalytic Proton acceptor.

The protein belongs to the uracil-DNA glycosylase (UDG) superfamily. UNG family.

The protein resides in the host nucleus. It catalyses the reaction Hydrolyzes single-stranded DNA or mismatched double-stranded DNA and polynucleotides, releasing free uracil.. Excises uracil residues from the DNA which can arise as a result of misincorporation of dUMP residues by DNA polymerase or deamination of cytosines. Therefore may reduce deleterious uracil incorporation into the viral genome, particularly in terminally differentiated cells which lack DNA repair enzymes. This chain is Uracil-DNA glycosylase (U81), found in Homo sapiens (Human).